We begin with the raw amino-acid sequence, 421 residues long: MTVETTAEFDVREAVHEAARRARVASRALAQLTTAQKNDALHAAADTLLAAADTVLAANAEDIAAAEAAGTEASLLDRLRLTKARIDGIASGLRQVAGLPDPVGGVVRGSTLPNGLEIRQVRVPLGVVGMVYEARPNVTVDAFGLALKSGNAALLRGSSSAAKSNAALVEILREALRAQQIPADAVQLLPSHDRSSVTHLIQARGLVDVVIPRGGAGLINAVVRDAIVPTIETGTGNCHVYVHAAADLDMAEQILINAKTRRPSVCNAAETVLIDRAVADTAVPRLTAALREHGVTIHGDLPGLVPATDTDWGEEYLTLDIALKVVDNLDAAVEHINTWGTGHTEAIVTGDLAAAREFTSRVDAAAVMVNASTAFTDGEQFGFGAEIGISTQKLHARGPMALPELTSTKWIVWGEGQIRPV.

It belongs to the gamma-glutamyl phosphate reductase family.

It is found in the cytoplasm. The enzyme catalyses L-glutamate 5-semialdehyde + phosphate + NADP(+) = L-glutamyl 5-phosphate + NADPH + H(+). It functions in the pathway amino-acid biosynthesis; L-proline biosynthesis; L-glutamate 5-semialdehyde from L-glutamate: step 2/2. Catalyzes the NADPH-dependent reduction of L-glutamate 5-phosphate into L-glutamate 5-semialdehyde and phosphate. The product spontaneously undergoes cyclization to form 1-pyrroline-5-carboxylate. This Nocardia farcinica (strain IFM 10152) protein is Gamma-glutamyl phosphate reductase.